The following is a 115-amino-acid chain: Thrombospondin type-1 domain-containing protein 8 (115 aa).

The first 21 residues, 1–21, serve as a signal peptide directing secretion; sequence MARTPGALLLAPLLLLQLATP. The region spanning 53 to 104 is the TSP type-1 domain; the sequence is DSILGPWGKWRCLCDLGKQERSREVVGTAPGPVFMDPEKLIQLRPCRQRDCP.

The chain is Thrombospondin type-1 domain-containing protein 8 from Homo sapiens (Human).